Here is a 1010-residue protein sequence, read N- to C-terminus: Lethal(2) giant larvae protein homolog SRO77 (1010 aa).

14 WD repeats span residues 47–80, 87–122, 127–163, 182–215, 240–275, 299–364, 372–407, 431–504, 518–595, 602–637, 649–700, 709–763, 768–815, and 829–852; these read TVTT…VVFT, IKHM…TTVF, ITCI…KLKI, SIQW…KQHF, VIQS…IHAR, AIFK…QKLF, LINF…ETLI, VTTC…FEVN, KNIS…STVI, VSAI…FNEN, VSTV…DATK, GINS…THAL, IATS…KNLR, and SILE…SVLN. The segment at 932–958 is disordered; the sequence is SNAARKLPPGTEDHRYARPVRSSGRSN.

Belongs to the WD repeat L(2)GL family. Interacts with SEC9.

Acts as an allosteric regulator of polarized exocytosis by promoting the targeted fusion of vesicles with the plasma membrane. Involved in maintenance of ion homeostasis in cells exposed to NaCl stress. May be involved in the targeting of the myosin proteins to their intrinsic pathways. Multicopy suppressor of RHO3. May also participate in the maintenance of cell polarity and bud growth. The polypeptide is Lethal(2) giant larvae protein homolog SRO77 (SRO77) (Saccharomyces cerevisiae (strain ATCC 204508 / S288c) (Baker's yeast)).